The sequence spans 101 residues: RNA silencing suppressor (101 aa).

A basic region spans residues 47 to 50 (RRRR). The C4-type zinc-finger motif lies at 57–78 (CPRCARVSPGFYFTTRCDGKTC).

Belongs to the carlaviruses nucleic acid-binding protein family.

Its function is as follows. Suppressor of viral-induced RNA silencing. The potential mechanism of action is based on sequestering siRNAs. The chain is RNA silencing suppressor (TUC) from Dianthus caryophyllus (Carnation).